We begin with the raw amino-acid sequence, 387 residues long: Carbamoyl phosphate synthase small chain (387 aa).

The CPSase stretch occupies residues 1–196; that stretch reads MEGVLSQLAV…FSINKQKFLF (196 aa). Residues Ser-51, Gly-245, and Gly-247 each contribute to the L-glutamine site. Positions 197 to 384 constitute a Glutamine amidotransferase type-1 domain; that stretch reads HVVVYDFGVK…IKLIVSQKTT (188 aa). The Nucleophile role is filled by Cys-273. Leu-274, Gln-277, Asn-315, and Phe-318 together coordinate L-glutamine. Residues His-357 and Glu-359 contribute to the active site.

It belongs to the CarA family. As to quaternary structure, composed of two chains; the small (or glutamine) chain promotes the hydrolysis of glutamine to ammonia, which is used by the large (or ammonia) chain to synthesize carbamoyl phosphate. Tetramer of heterodimers (alpha,beta)4.

The catalysed reaction is hydrogencarbonate + L-glutamine + 2 ATP + H2O = carbamoyl phosphate + L-glutamate + 2 ADP + phosphate + 2 H(+). It carries out the reaction L-glutamine + H2O = L-glutamate + NH4(+). It participates in amino-acid biosynthesis; L-arginine biosynthesis; carbamoyl phosphate from bicarbonate: step 1/1. The protein operates within pyrimidine metabolism; UMP biosynthesis via de novo pathway; (S)-dihydroorotate from bicarbonate: step 1/3. Its function is as follows. Small subunit of the glutamine-dependent carbamoyl phosphate synthetase (CPSase). CPSase catalyzes the formation of carbamoyl phosphate from the ammonia moiety of glutamine, carbonate, and phosphate donated by ATP, constituting the first step of 2 biosynthetic pathways, one leading to arginine and/or urea and the other to pyrimidine nucleotides. The small subunit (glutamine amidotransferase) binds and cleaves glutamine to supply the large subunit with the substrate ammonia. The protein is Carbamoyl phosphate synthase small chain of Buchnera aphidicola subsp. Acyrthosiphon pisum (strain APS) (Acyrthosiphon pisum symbiotic bacterium).